Reading from the N-terminus, the 439-residue chain is RNA polymerase II-associated protein RBA50 (439 aa).

2 disordered regions span residues Met-1–Glu-35 and Leu-49–Lys-79. Residues Ser-15 to Gly-30 show a composition bias toward polar residues.

Belongs to the RPAP1 family.

The protein resides in the cytoplasm. Forms an interface between the RNA polymerase II enzyme and chaperone/scaffolding proteins, suggesting that it is required to connect RNA polymerase II to regulators of protein complex formation. In Saccharomyces cerevisiae (strain ATCC 204508 / S288c) (Baker's yeast), this protein is RNA polymerase II-associated protein RBA50 (RBA50).